The chain runs to 173 residues: Cytochrome c homolog (173 aa).

The Cytoplasmic segment spans residues 1 to 8; sequence MSGKELNK. The helical; Signal-anchor transmembrane segment at 9-29 threads the bilayer; that stretch reads IVAAILFASLIAMMVGFIANI. Topologically, residues 30-173 are periplasmic; it reads LYKPVLEPKH…LFLKTYVHDK (144 aa). Heme c is bound by residues C82, C85, H86, and M148.

It belongs to the cytochrome c family. In terms of processing, binds 1 heme c group covalently per subunit.

It localises to the cell membrane. In terms of biological role, may be involved in electron transfer from bc1 complex to aa3. The sequence is that of Cytochrome c homolog (cycM) from Rickettsia bellii (strain RML369-C).